Reading from the N-terminus, the 358-residue chain is Heme A synthase (358 aa).

Helical transmembrane passes span 25–45, 111–131, 141–161, 176–196, 210–230, 269–289, 304–324, and 326–346; these read LVRY…MVGG, LLAR…WLTG, MLGL…MVAS, IHLT…RGLV, FAGW…LVAG, VQFV…LHAV, TIVL…TLLM, and APLH…AFAV. A heme-binding site is contributed by His273. His334 contributes to the heme binding site.

Belongs to the COX15/CtaA family. Type 2 subfamily. As to quaternary structure, interacts with CtaB. Heme b serves as cofactor.

The protein localises to the cell membrane. The catalysed reaction is Fe(II)-heme o + 2 A + H2O = Fe(II)-heme a + 2 AH2. The protein operates within porphyrin-containing compound metabolism; heme A biosynthesis; heme A from heme O: step 1/1. Its function is as follows. Catalyzes the conversion of heme O to heme A by two successive hydroxylations of the methyl group at C8. The first hydroxylation forms heme I, the second hydroxylation results in an unstable dihydroxymethyl group, which spontaneously dehydrates, resulting in the formyl group of heme A. The protein is Heme A synthase of Brucella abortus (strain S19).